A 796-amino-acid chain; its full sequence is RNA cytosine-C(5)-methyltransferase NSUN2 (796 aa).

The span at 1–11 (MGRRARDRRRQ) shows a compositional bias: basic residues. A disordered region spans residues 1–36 (MGRRARDRRRQLQPQQRRERSGGGGGGGDDQAGWAG). Over residues 22–36 (GGGGGGGDDQAGWAG) the composition is skewed to gly residues. Residues 184–190 (CAAPGSK), D215, D242, and D268 contribute to the S-adenosyl-L-methionine site. C321 acts as the Nucleophile in catalysis. Disordered stretches follow at residues 435–501 (WNKR…CGPP) and 707–796 (RKEG…NVKD). Composition is skewed to basic and acidic residues over residues 467–483 (ATEKPTLAEDEEPKKVQ), 708–721 (KEGESEGKTEEEVQ), and 733–746 (VEDKERDAVTKMEA). Over residues 774-783 (CSKNTNSHIN) the composition is skewed to polar residues. Over residues 784–796 (QESKDMNTNNVKD) the composition is skewed to basic and acidic residues.

The protein belongs to the class I-like SAM-binding methyltransferase superfamily. RsmB/NOP family. TRM4 subfamily.

It localises to the nucleus. Its subcellular location is the nucleolus. The protein localises to the cytoplasm. It is found in the mitochondrion. The protein resides in the cytoskeleton. It localises to the spindle. Its subcellular location is the secreted. The protein localises to the extracellular exosome. It catalyses the reaction cytidine(48) in tRNA + S-adenosyl-L-methionine = 5-methylcytidine(48) in tRNA + S-adenosyl-L-homocysteine + H(+). It carries out the reaction cytidine(49) in tRNA + S-adenosyl-L-methionine = 5-methylcytidine(49) in tRNA + S-adenosyl-L-homocysteine + H(+). The catalysed reaction is cytidine(50) in tRNA + S-adenosyl-L-methionine = 5-methylcytidine(50) in tRNA + S-adenosyl-L-homocysteine + H(+). The enzyme catalyses cytidine(34) in tRNA precursor + S-adenosyl-L-methionine = 5-methylcytidine(34) in tRNA precursor + S-adenosyl-L-homocysteine + H(+). It catalyses the reaction a cytidine in mRNA + S-adenosyl-L-methionine = a 5-methylcytidine in mRNA + S-adenosyl-L-homocysteine + H(+). RNA cytosine C(5)-methyltransferase that methylates cytosine to 5-methylcytosine (m5C) in various RNAs, such as tRNAs, mRNAs and some long non-coding RNAs (lncRNAs). Involved in various processes, such as epidermal stem cell differentiation, testis differentiation and maternal to zygotic transition during early development: acts by increasing protein synthesis; cytosine C(5)-methylation promoting tRNA stability and preventing mRNA decay. Methylates cytosine to 5-methylcytosine (m5C) at positions 34 and 48 of intron-containing tRNA(Leu)(CAA) precursors, and at positions 48, 49 and 50 of tRNA(Gly)(GCC) precursors. tRNA methylation is required generation of RNA fragments derived from tRNAs (tRFs). Also mediates C(5)-methylation of mitochondrial tRNAs. Catalyzes cytosine C(5)-methylation of mRNAs, leading to stabilize them and prevent mRNA decay. Cytosine C(5)-methylation of mRNAs also regulates mRNA export. Also mediates cytosine C(5)-methylation of non-coding RNAs, such as vault RNAs (vtRNAs), promoting their processing into regulatory small RNAs. Required for proper spindle assembly and chromosome segregation, independently of its methyltransferase activity. This chain is RNA cytosine-C(5)-methyltransferase NSUN2, found in Gallus gallus (Chicken).